Consider the following 171-residue polypeptide: Large ribosomal subunit protein uL10 (171 aa).

The protein belongs to the universal ribosomal protein uL10 family. Part of the ribosomal stalk of the 50S ribosomal subunit. The N-terminus interacts with L11 and the large rRNA to form the base of the stalk. The C-terminus forms an elongated spine to which L12 dimers bind in a sequential fashion forming a multimeric L10(L12)X complex.

Its function is as follows. Forms part of the ribosomal stalk, playing a central role in the interaction of the ribosome with GTP-bound translation factors. This is Large ribosomal subunit protein uL10 from Corynebacterium efficiens (strain DSM 44549 / YS-314 / AJ 12310 / JCM 11189 / NBRC 100395).